A 131-amino-acid chain; its full sequence is D-ribose pyranase (131 aa).

Residue H20 is the Proton donor of the active site. Substrate contacts are provided by residues D28, H98, and Y120–N122.

The protein belongs to the RbsD / FucU family. RbsD subfamily. Homodecamer.

It is found in the cytoplasm. It catalyses the reaction beta-D-ribopyranose = beta-D-ribofuranose. It functions in the pathway carbohydrate metabolism; D-ribose degradation; D-ribose 5-phosphate from beta-D-ribopyranose: step 1/2. Catalyzes the interconversion of beta-pyran and beta-furan forms of D-ribose. This is D-ribose pyranase from Limosilactobacillus reuteri (strain DSM 20016) (Lactobacillus reuteri).